A 61-amino-acid polypeptide reads, in one-letter code: Ferredoxin-2 (61 aa).

4Fe-4S ferredoxin-type domains lie at 2–27 and 28–61; these read HRITEECTYCAACEPECPVNAISAGD and EIYIVDESVCTDCEGYYDEPACVAVCPVDCIIKV. Positions 8, 11, 14, 18, 37, 40, 49, and 53 each coordinate [4Fe-4S] cluster.

[4Fe-4S] cluster is required as a cofactor.

Functionally, ferredoxins are iron-sulfur proteins that transfer electrons in a wide variety of metabolic reactions. This chain is Ferredoxin-2, found in Chlorobium limicola.